A 515-amino-acid polypeptide reads, in one-letter code: 2-isopropylmalate synthase (515 aa).

One can recognise a Pyruvate carboxyltransferase domain in the interval Val5 to His267. Mn(2+) contacts are provided by Asp14, His202, His204, and Asn238. Residues Val392–His515 are regulatory domain.

The protein belongs to the alpha-IPM synthase/homocitrate synthase family. LeuA type 1 subfamily. Homodimer. Mn(2+) serves as cofactor.

Its subcellular location is the cytoplasm. It catalyses the reaction 3-methyl-2-oxobutanoate + acetyl-CoA + H2O = (2S)-2-isopropylmalate + CoA + H(+). It participates in amino-acid biosynthesis; L-leucine biosynthesis; L-leucine from 3-methyl-2-oxobutanoate: step 1/4. Its function is as follows. Catalyzes the condensation of the acetyl group of acetyl-CoA with 3-methyl-2-oxobutanoate (2-ketoisovalerate) to form 3-carboxy-3-hydroxy-4-methylpentanoate (2-isopropylmalate). The protein is 2-isopropylmalate synthase of Haemophilus influenzae (strain 86-028NP).